The primary structure comprises 126 residues: Histone H2B type 1-K (126 aa).

Over residues 1–12 (MPEPAKSAPAPK) the composition is skewed to low complexity. A disordered region spans residues 1–36 (MPEPAKSAPAPKKGSKKAVTKAQKIDGKKRKRSRKE). N-acetylproline is present on P2. Residue E3 is modified to ADP-ribosyl glutamic acid. K6 is modified (N6-(2-hydroxyisobutyryl)lysine; alternate). N6-(beta-hydroxybutyryl)lysine; alternate is present on K6. At K6 the chain carries N6-acetyllysine; alternate. K6 carries the post-translational modification N6-butyryllysine; alternate. At K6 the chain carries N6-crotonyllysine; alternate. The residue at position 6 (K6) is an N6-lactoyllysine; alternate. K6 participates in a covalent cross-link: Glycyl lysine isopeptide (Lys-Gly) (interchain with G-Cter in SUMO2); alternate. Residue S7 is modified to ADP-ribosylserine. At K12 the chain carries N6-(beta-hydroxybutyryl)lysine; alternate. N6-acetyllysine; alternate occurs at positions 12 and 13. K12 and K13 each carry N6-crotonyllysine; alternate. K12 carries the post-translational modification N6-lactoyllysine; alternate. K13 is subject to N6-(2-hydroxyisobutyryl)lysine; alternate. S15 carries the phosphoserine; by STK4/MST1 modification. Residues K16, K17, K21, and K24 each carry the N6-acetyllysine; alternate modification. K16, K17, K21, K24, and K35 each carry N6-crotonyllysine; alternate. N6-lactoyllysine; alternate is present on residues K16, K17, K21, and K24. K17 carries the N6-glutaryllysine; alternate modification. N6-(2-hydroxyisobutyryl)lysine; alternate is present on residues K21, K24, and K35. An N6-(beta-hydroxybutyryl)lysine; alternate modification is found at K21. The residue at position 21 (K21) is an N6-butyryllysine; alternate. K21 is covalently cross-linked (Glycyl lysine isopeptide (Lys-Gly) (interchain with G-Cter in SUMO2); alternate). The residue at position 35 (K35) is an N6-(beta-hydroxybutyryl)lysine; alternate. K35 carries the post-translational modification N6-glutaryllysine; alternate. An N6-succinyllysine; alternate modification is found at K35. K35 participates in a covalent cross-link: Glycyl lysine isopeptide (Lys-Gly) (interchain with G-Cter in ubiquitin); alternate. E36 is modified (polyADP-ribosyl glutamic acid). At S37 the chain carries Phosphoserine; by AMPK. N6-(2-hydroxyisobutyryl)lysine; alternate occurs at positions 44, 47, and 58. An N6-lactoyllysine; alternate modification is found at K44. N6-glutaryllysine; alternate is present on residues K44 and K47. K47 is subject to N6-methyllysine; alternate. Residue K58 is modified to N6,N6-dimethyllysine; alternate. R80 carries the dimethylated arginine modification. N6-(2-hydroxyisobutyryl)lysine; alternate is present on K86. Residue K86 is modified to N6-acetyllysine; alternate. K86 carries the post-translational modification N6-lactoyllysine; alternate. K86 is modified (N6,N6,N6-trimethyllysine; alternate). R87 and R93 each carry omega-N-methylarginine. N6-(2-hydroxyisobutyryl)lysine; alternate is present on K109. An N6-lactoyllysine; alternate modification is found at K109. At K109 the chain carries N6-glutaryllysine; alternate. Position 109 is an N6-methyllysine; alternate (K109). S113 carries an O-linked (GlcNAc) serine glycan. Phosphothreonine is present on T116. Residues K117 and K121 each carry the N6-(2-hydroxyisobutyryl)lysine; alternate modification. K117 carries the N6-(beta-hydroxybutyryl)lysine; alternate modification. An N6-lactoyllysine; alternate mark is found at K117 and K121. N6-glutaryllysine; alternate occurs at positions 117 and 121. K117 and K121 each carry N6-succinyllysine; alternate. The residue at position 117 (K117) is an N6-methylated lysine; alternate. K121 participates in a covalent cross-link: Glycyl lysine isopeptide (Lys-Gly) (interchain with G-Cter in ubiquitin); alternate.

This sequence belongs to the histone H2B family. The nucleosome is a histone octamer containing two molecules each of H2A, H2B, H3 and H4 assembled in one H3-H4 heterotetramer and two H2A-H2B heterodimers. The octamer wraps approximately 147 bp of DNA. In terms of processing, monoubiquitination at Lys-35 (H2BK34Ub) by the MSL1/MSL2 dimer is required for histone H3 'Lys-4' (H3K4me) and 'Lys-79' (H3K79me) methylation and transcription activation at specific gene loci, such as HOXA9 and MEIS1 loci. Similarly, monoubiquitination at Lys-121 (H2BK120Ub) by the RNF20/40 complex gives a specific tag for epigenetic transcriptional activation and is also prerequisite for histone H3 'Lys-4' and 'Lys-79' methylation. It also functions cooperatively with the FACT dimer to stimulate elongation by RNA polymerase II. H2BK120Ub also acts as a regulator of mRNA splicing: deubiquitination by USP49 is required for efficient cotranscriptional splicing of a large set of exons. Phosphorylated on Ser-15 (H2BS14ph) by STK4/MST1 during apoptosis; which facilitates apoptotic chromatin condensation. Also phosphorylated on Ser-15 in response to DNA double strand breaks (DSBs), and in correlation with somatic hypermutation and immunoglobulin class-switch recombination. Phosphorylation at Ser-37 (H2BS36ph) by AMPK in response to stress promotes transcription. Post-translationally, glcNAcylation at Ser-113 promotes monoubiquitination of Lys-121. It fluctuates in response to extracellular glucose, and associates with transcribed genes. In terms of processing, ADP-ribosylated by PARP1 or PARP2 on Ser-7 (H2BS6ADPr) in response to DNA damage. H2BS6ADPr promotes recruitment of CHD1L. Mono-ADP-ribosylated on Glu-3 (H2BE2ADPr) by PARP3 in response to single-strand breaks. Poly ADP-ribosylation on Glu-36 (H2BE35ADPr) by PARP1 regulates adipogenesis: it inhibits phosphorylation at Ser-37 (H2BS36ph), thereby blocking expression of pro-adipogenetic genes. Crotonylation (Kcr) is specifically present in male germ cells and marks testis-specific genes in post-meiotic cells, including X-linked genes that escape sex chromosome inactivation in haploid cells. Crotonylation marks active promoters and enhancers and confers resistance to transcriptional repressors. It is also associated with post-meiotically activated genes on autosomes. Post-translationally, lactylated in macrophages by EP300/P300 by using lactoyl-CoA directly derived from endogenous or exogenous lactate, leading to stimulates gene transcription.

It is found in the nucleus. Its subcellular location is the chromosome. Its function is as follows. Core component of nucleosome. Nucleosomes wrap and compact DNA into chromatin, limiting DNA accessibility to the cellular machineries which require DNA as a template. Histones thereby play a central role in transcription regulation, DNA repair, DNA replication and chromosomal stability. DNA accessibility is regulated via a complex set of post-translational modifications of histones, also called histone code, and nucleosome remodeling. This Bos taurus (Bovine) protein is Histone H2B type 1-K.